A 651-amino-acid chain; its full sequence is Probable potassium transport system protein Kup (651 aa).

The next 12 membrane-spanning stretches (helical) occupy residues 41-61, 82-102, 130-150, 163-183, 194-214, 235-255, 276-296, 309-329, 366-386, 395-415, 426-446, and 450-470; these read LVLG…IYAF, VVSL…VLFV, LILG…VITP, IVAP…LVTL, VAIV…ASGL, FLTV…LAMT, WLWI…AFIL, MIPS…TVIA, IYIP…VLGF, AYGI…YIVM, ALPI…ANII, and EGGW…WTWV.

Belongs to the HAK/KUP transporter (TC 2.A.72) family.

Its subcellular location is the cell inner membrane. It carries out the reaction K(+)(in) + H(+)(in) = K(+)(out) + H(+)(out). Transport of potassium into the cell. Likely operates as a K(+):H(+) symporter. The polypeptide is Probable potassium transport system protein Kup (Brucella canis (strain ATCC 23365 / NCTC 10854 / RM-666)).